The primary structure comprises 103 residues: MSVQGIEGVLQQLQVTALQASGSAKTLPAEAGFASELKAAIGKISENQQTARTLAQNFELGVPGVGINDVMVNMQKSSVSLQLGIQVRNKLVAAYQDVMNMGV.

The protein belongs to the FliE family.

It localises to the bacterial flagellum basal body. This Yersinia enterocolitica serotype O:8 / biotype 1B (strain NCTC 13174 / 8081) protein is Flagellar hook-basal body complex protein FliE.